The chain runs to 383 residues: F-box/kelch-repeat protein At2g29830 (383 aa).

Residues 1 to 21 form a disordered region; it reads MVVLSEIPGDPNEDNQNENPQ. The span at 11–21 shows a compositional bias: acidic residues; the sequence is PNEDNQNENPQ. Residues 27–73 form the F-box domain; sequence LPILLQLPEELIASIVALIPRCHYPSLSLVSRAFRHLITSQELYVAR. Kelch repeat units lie at residues 130-178, 179-224, 226-272, 274-317, and 324-370; these read KMYV…IIDG, RIYV…FITY, VMQG…VVGD, LYAL…YTST, and KLVI…RDLP.

The polypeptide is F-box/kelch-repeat protein At2g29830 (Arabidopsis thaliana (Mouse-ear cress)).